The sequence spans 331 residues: Pantothenate kinase (331 aa).

109 to 116 serves as a coordination point for ATP; the sequence is GSVAVGKS.

The protein belongs to the prokaryotic pantothenate kinase family.

The protein localises to the cytoplasm. It catalyses the reaction (R)-pantothenate + ATP = (R)-4'-phosphopantothenate + ADP + H(+). Its pathway is cofactor biosynthesis; coenzyme A biosynthesis; CoA from (R)-pantothenate: step 1/5. The sequence is that of Pantothenate kinase from Sinorhizobium medicae (strain WSM419) (Ensifer medicae).